The primary structure comprises 78 residues: Large ribosomal subunit protein bL28 (78 aa).

This sequence belongs to the bacterial ribosomal protein bL28 family.

In Flavobacterium psychrophilum (strain ATCC 49511 / DSM 21280 / CIP 103535 / JIP02/86), this protein is Large ribosomal subunit protein bL28.